The sequence spans 285 residues: Bifunctional protein FolD (285 aa).

Residues 166–168 and Ile232 contribute to the NADP(+) site; that span reads GAS.

It belongs to the tetrahydrofolate dehydrogenase/cyclohydrolase family. Homodimer.

It carries out the reaction (6R)-5,10-methylene-5,6,7,8-tetrahydrofolate + NADP(+) = (6R)-5,10-methenyltetrahydrofolate + NADPH. The catalysed reaction is (6R)-5,10-methenyltetrahydrofolate + H2O = (6R)-10-formyltetrahydrofolate + H(+). The protein operates within one-carbon metabolism; tetrahydrofolate interconversion. With respect to regulation, the NAD(+)-dependent dehydrogenase is activated by inorganic phosphate. Catalyzes the oxidation of 5,10-methylenetetrahydrofolate to 5,10-methenyltetrahydrofolate and then the hydrolysis of 5,10-methenyltetrahydrofolate to 10-formyltetrahydrofolate. This chain is Bifunctional protein FolD, found in Photobacterium phosphoreum.